The primary structure comprises 475 residues: Chemotaxis protein MotD (475 aa).

3 disordered regions span residues methionine 1–glycine 175, leucine 195–aspartate 243, and glycine 408–methionine 475. Residues arginine 9–valine 22 show a composition bias toward polar residues. Over residues alanine 79–alanine 100 the composition is skewed to low complexity. Over residues histidine 143–isoleucine 155 the composition is skewed to basic and acidic residues. Residues glycine 408–glutamine 417 show a composition bias toward gly residues. Basic and acidic residues predominate over residues glutamate 427–threonine 449.

It localises to the cytoplasm. Functionally, required for the rotation of the flagellar motor. Has a positive effect as flagellar rotation increases when an excess of motd is present. The protein is Chemotaxis protein MotD (motD) of Rhizobium meliloti (Ensifer meliloti).